The sequence spans 504 residues: MGFLSAGGLWASLFRARISPIVETDEVLPLTLIDNIAAARNAILSEVIRFDQVLDVVKLRDGLTELIDKRGWRKLGGRLRLRPNGSLEIHVPREFTEERPAFRFTSQAFDIAIEEHALGSQLPKLSDGPSLQPGSTSVDKFNLIPDKPEKLDDYVYSDRPILALHVTSFTNSCIVTLTWSHVVFGARGIKELIAAWSKVLHGEQNVPLLLGTHQDVLAGIGTDGDKTAPFLLDPIKIKGLGLVRIIFGLLWEIWQHPTVETRALHLPKRFVSQLRQKCMEELGAFCREDPAPFISEGDVLEAWCSRFVAQARADEKPALVTNALDIKDRLTAPWSSRGEYLQNTGCCTWTPVQPETLLRSPLGELAYVIRRSIQELATDDQLRAQLRIFRSLGHTKMLPLFGNPNSRVISFSNWTKFNLFEVTNLGPAVISTSPSTRSDASTSPIGRPVYMHCEAAGDSRMLRNCFNVTGKDWDGSYWITAHLYPEDWTKLEEYMRQTQQHISD.

Positions 1–18 are cleaved as a signal peptide; the sequence is MGFLSAGGLWASLFRARI. N84 carries an N-linked (GlcNAc...) asparagine glycan. Residue H181 is the Proton acceptor of the active site. N-linked (GlcNAc...) asparagine glycans are attached at residues N413 and N467.

This sequence belongs to the plant acyltransferase family.

It functions in the pathway mycotoxin biosynthesis. In terms of biological role, acetyltransferase; part of the gene cluster that mediates the biosynthesis of the mycotoxin pyrichalasin H, a tyrosine-derived cytochalasan that inhibits the growth of rice seedlings, but also inhibits lymphocyte capping and actin polymerization and alters cell morphology. Pyrichalasin H is indicated as the responsible agent for the genus-specific pathogenicity of M.grisea toward crabgrass. The first step in the pathway is catalyzed by the O-methyltransferase pyiA which methylates free tyrosine to generate the precursor O-methyltyrosine. The hybrid PKS-NRPS pyiS, assisted by the enoyl reductase pyiC, are responsible for fusion of the O-methyltyrosine precursor and the polyketide backbone. The polyketide synthase module (PKS) of pyiS is responsible for the synthesis of the polyketide backbone and the downstream nonribosomal peptide synthetase (NRPS) amidates the carboxyl end of the polyketide with the O-methyltyrosine precursor. As the NRPS A-domain demonstrates substrate tolerance, pyiS can also use phenylalanine, tyrosine and even para-chlorophenylalanine as amino acid precursor, which leads to the production of novel cytochalasans, including halogenated cytochalasans. Because pyiS lacks a designated enoylreductase (ER) domain, the required activity is provided the enoyl reductase pyiC. Reduction by the hydrolyase pyiE leads to 1,5-dihydropyrrolone, which is substrate for dehydration and intra-molecular Diels-Alder cyclization by the Diels-Alderase pyiF to yield the required isoindolone-fused macrocycle. The tailoring cytochrome P450 monooxygenases piyD and piyG catalyze the hydroxylation at C-18 and C-7, respectivily, whereas the short-chain dehydrogenase/reductase pyiH reduces the carbonyl at C-21 in preparation for the transfer of an acetyl group by the acetyltransferase pyiB. These 3 reactions whose order is not clear yet, lead to the production of O-methylpyrichalasin J, a deacetylated pyrichalasin H. Finally, pyiB to converts O-methylpyrichalasin J into the final product pyrichalasin H via acetylation of C-21. This Pyricularia grisea (Crabgrass-specific blast fungus) protein is Acetyltransferase pyiB.